The sequence spans 623 residues: Chaperone protein DnaK (623 aa).

T175 bears the Phosphothreonine; by autocatalysis mark. The segment at 580–623 is disordered; that stretch reads PEGAQGAGFDPNNMGGANAGNASAENDKKDDNVVDADYKVEDDK. Residues 591–603 show a composition bias toward low complexity; sequence NNMGGANAGNASA. The span at 604 to 623 shows a compositional bias: basic and acidic residues; the sequence is ENDKKDDNVVDADYKVEDDK.

This sequence belongs to the heat shock protein 70 family.

Functionally, acts as a chaperone. The chain is Chaperone protein DnaK from Clostridium botulinum (strain Okra / Type B1).